A 327-amino-acid polypeptide reads, in one-letter code: tRNA uridine(34) hydroxylase (327 aa).

A Rhodanese domain is found at 123–217; it reads SDPEVLLVDT…YLEEVKQEES (95 aa). The Cysteine persulfide intermediate role is filled by Cys-177.

Belongs to the TrhO family.

It carries out the reaction uridine(34) in tRNA + AH2 + O2 = 5-hydroxyuridine(34) in tRNA + A + H2O. Its function is as follows. Catalyzes oxygen-dependent 5-hydroxyuridine (ho5U) modification at position 34 in tRNAs. This chain is tRNA uridine(34) hydroxylase, found in Shewanella piezotolerans (strain WP3 / JCM 13877).